The sequence spans 155 residues: Ribosome maturation factor RimP (155 aa).

Belongs to the RimP family.

The protein localises to the cytoplasm. In terms of biological role, required for maturation of 30S ribosomal subunits. This Synechococcus sp. (strain CC9605) protein is Ribosome maturation factor RimP.